We begin with the raw amino-acid sequence, 329 residues long: Glycerol-3-phosphate dehydrogenase [NAD(P)+] (329 aa).

Positions 10, 11, 31, and 105 each coordinate NADPH. Sn-glycerol 3-phosphate is bound by residues Lys105, Gly134, and Ser136. Position 138 (Ala138) interacts with NADPH. Sn-glycerol 3-phosphate is bound by residues Lys189, Asp242, Ser252, Arg253, and Asn254. Catalysis depends on Lys189, which acts as the Proton acceptor. Arg253 contributes to the NADPH binding site. The NADPH site is built by Val277 and Glu279.

Belongs to the NAD-dependent glycerol-3-phosphate dehydrogenase family.

The protein resides in the cytoplasm. It carries out the reaction sn-glycerol 3-phosphate + NAD(+) = dihydroxyacetone phosphate + NADH + H(+). The enzyme catalyses sn-glycerol 3-phosphate + NADP(+) = dihydroxyacetone phosphate + NADPH + H(+). It participates in membrane lipid metabolism; glycerophospholipid metabolism. Functionally, catalyzes the reduction of the glycolytic intermediate dihydroxyacetone phosphate (DHAP) to sn-glycerol 3-phosphate (G3P), the key precursor for phospholipid synthesis. This is Glycerol-3-phosphate dehydrogenase [NAD(P)+] from Neisseria gonorrhoeae (strain ATCC 700825 / FA 1090).